Consider the following 926-residue polypeptide: Peripheral plasma membrane protein CASK (926 aa).

One can recognise a Protein kinase domain in the interval 12–276; the sequence is YELCEVIGKG…VYEALNHPWL (265 aa). ATP-binding positions include 18–26 and K41; that span reads IGKGPFSVV. The residue at position 51 (S51) is a Phosphoserine. D141 is an active-site residue. 2 positions are modified to phosphoserine; by autocatalysis: S151 and S155. Residue T182 is modified to Phosphothreonine. 2 positions are modified to phosphoserine: K192 and S313. Residues 305-315 form a calmodulin-binding region; that stretch reads KGAVLAAVSSH. 2 consecutive L27 domains span residues 343–398 and 402–455; these read AERA…SPQI and PSDA…YSDE. Positions 482–909 are required for interaction with NRXN1 (via C-terminal tail); that stretch reads MENVTRVRLV…DETIRHLEEA (428 aa). The PDZ domain maps to 489 to 564; sequence RLVQFQKNTD…MLREMRGSIT (76 aa). 2 positions are modified to phosphoserine: Y571 and S577. Residues 574-610 form a disordered region; sequence QSSSCERDSPSTSRQSPANGHSSTNNSVSDLPSTTQP. Residues 612–682 form the SH3 domain; sequence GRQIYVRAQF…PSPELQEWRV (71 aa). Residues 739–911 enclose the Guanylate kinase-like domain; that stretch reads RKTLVLLGAH…TIRHLEEAVE (173 aa).

The protein in the N-terminal section; belongs to the protein kinase superfamily. CAMK Ser/Thr protein kinase family. CaMK subfamily. It belongs to the MAGUK family. In terms of assembly, CASK and LIN7 form two mutually exclusive tripartite complexes with APBA1 or CASKIN1. Component of the brain-specific heterotrimeric complex (LIN-10-LIN-2-LIN-7 complex) composed of at least APBA1, CASK, and LIN7, which associates with the motor protein KIF17 to transport vesicles along microtubules. Forms a heterotrimeric complex with DLG1 and LIN7B via their L27 domains. Identified in a complex with ACTN4, IQGAP1, MAGI2, NPHS1, SPTAN1 and SPTBN1. Part of a complex containing CASK, TBR1 and TSPYL2. Interacts with WHRN. Interacts (via the PDZ, SH3 and guanylate kinase-like domains) with NRXN1 (via C-terminus). Interacts with CASKIN1, APBA1, LIN7(A/B/C) and L27 domain of DLG1 and isoform 2 of DLG4. Interacts with FCHSD2. Interacts with KIRREL3. Interacts with TBR1. Interacts with TSPYL2. The cofactor is Unlike other protein kinases, does not require a divalent cation such as magnesium for catalytic activity.. As to expression, ubiquitous. Expression is significantly greater in brain relative to kidney, lung, and liver and in fetal brain and kidney relative to lung and liver.

The protein resides in the nucleus. It is found in the cytoplasm. The protein localises to the cell membrane. It carries out the reaction L-seryl-[protein] + ATP = O-phospho-L-seryl-[protein] + ADP + H(+). The enzyme catalyses L-threonyl-[protein] + ATP = O-phospho-L-threonyl-[protein] + ADP + H(+). Differs from archetypal CaMK members in that the kinase domain exhibits a constitutively active conformation and the autoinhibitory region does not engage in direct contact with the ATP-binding cleft, although it still binds Ca(2+)/CAM. In terms of biological role, multidomain scaffolding Mg(2+)-independent protein kinase that catalyzes the phosphotransfer from ATP to proteins such as NRXN1, and plays a role in synaptic transmembrane protein anchoring and ion channel trafficking. Contributes to neural development and regulation of gene expression via interaction with the transcription factor TBR1. Binds to cell-surface proteins, including amyloid precursor protein, neurexins and syndecans. May mediate a link between the extracellular matrix and the actin cytoskeleton via its interaction with syndecan and with the actin/spectrin-binding protein 4.1. Component of the LIN-10-LIN-2-LIN-7 complex, which associates with the motor protein KIF17 to transport vesicles containing N-methyl-D-aspartate (NMDA) receptor subunit NR2B along microtubules. The sequence is that of Peripheral plasma membrane protein CASK from Homo sapiens (Human).